We begin with the raw amino-acid sequence, 454 residues long: Probable glycine dehydrogenase (decarboxylating) subunit 1 (454 aa).

The protein belongs to the GcvP family. N-terminal subunit subfamily. In terms of assembly, the glycine cleavage system is composed of four proteins: P, T, L and H. In this organism, the P 'protein' is a heterodimer of two subunits.

The enzyme catalyses N(6)-[(R)-lipoyl]-L-lysyl-[glycine-cleavage complex H protein] + glycine + H(+) = N(6)-[(R)-S(8)-aminomethyldihydrolipoyl]-L-lysyl-[glycine-cleavage complex H protein] + CO2. Functionally, the glycine cleavage system catalyzes the degradation of glycine. The P protein binds the alpha-amino group of glycine through its pyridoxal phosphate cofactor; CO(2) is released and the remaining methylamine moiety is then transferred to the lipoamide cofactor of the H protein. The sequence is that of Probable glycine dehydrogenase (decarboxylating) subunit 1 from Sorangium cellulosum (strain So ce56) (Polyangium cellulosum (strain So ce56)).